The chain runs to 366 residues: Peptide chain release factor 2 (366 aa).

Gln251 is modified (N5-methylglutamine).

This sequence belongs to the prokaryotic/mitochondrial release factor family. Methylated by PrmC. Methylation increases the termination efficiency of RF2.

The protein localises to the cytoplasm. Peptide chain release factor 2 directs the termination of translation in response to the peptide chain termination codons UGA and UAA. This chain is Peptide chain release factor 2 (prfB), found in Listeria monocytogenes serotype 4b (strain F2365).